A 194-amino-acid polypeptide reads, in one-letter code: Putative lipoprotein LppK (194 aa).

Positions 1–26 are cleaved as a signal peptide; the sequence is MSRWTHRTFFIALSAIVTTAGFGSSG. Cys-27 carries N-palmitoyl cysteine lipidation. Cys-27 is lipidated: S-diacylglycerol cysteine. Positions 174 to 194 are disordered; sequence GNSSGLTNPAPIKAPTPTPSH. The segment covering 185–194 has biased composition (pro residues); sequence IKAPTPTPSH.

It belongs to the MTB12 family.

The protein localises to the cell membrane. This is Putative lipoprotein LppK (lppK) from Mycobacterium leprae (strain TN).